We begin with the raw amino-acid sequence, 823 residues long: MEALGTGRDRTSQASATESLDLRRLSTRADSAYSSFSTASGDPETRTPSPGTERLPYLDWDYVRVVWGSQSPTSKDAVLSTTQRPVQAVAGHSDPRSPEVQGSPGPLNRQDTPLLYALAAEAEATAHTAEPPSPPASRDAYRQRLQGAQRRVLRETSFQRKEFRMSLPGRLRPAVPTRLPTAHVRSASSSQELGEEEPARTAVPALAAAGRGRLSSQQRQCCFSEPGKLHRVGWSGGPTGEDLRKDYSTQELQRGMHAKSKGLLETQSLSSTELNSGPADLGNAHRPAGRSQSVSGEVMGPCKGSERTVATVQAVPQRADIRRPLLHTKLSRSLTQKEVTGVCPGEALQTKPAGCGRRISETSVSTPGPSLPEDDVFLREAKTPSPQDSQGLPTSTSYRQYENDLSKKAGQIAVSAERPLHETPGITGTEDCGQAVNGSVDLSRPTSIPETTNDDIPTFDTNGTTDPSAATEKKPLKPPPVDVLRPSDSETPGSPHHTSLTWGQFDSKTTWPSRHFEALVQELARLDPSLSRTLAAQPGPEPPQGLLDGLFPVEEIRSAMRPALEEMGEKAAGASEEGSCGHHLTQDLQTSQEASRSENSTPDPDQSSGQEFPEGNSTQAKKVELARLLQKMLQDLHAEQERLRGTAADWTQRNGALEAAVSQACTPRELERFRRFMTDLERVLGLLLLLGSRLVRVNLALARAGSNSDPDERASLLQRLQLLQRQQEEAKELKEHVARREQTLRQVLERELPAEHLRSYCVLLASKARILSQQRSLDDRIRFLKDQLDTIWSDLSHHPLSPRLTWAPAIRPLNKQPFLATLI.

Met1 carries the post-translational modification N-acetylmethionine. Disordered stretches follow at residues 1 to 55 (MEAL…TERL), 72 to 110 (PTSK…LNRQ), and 124 to 159 (ATAH…TSFQ). Polar residues-rich tracts occupy residues 28-50 (RADS…TPSP) and 72-85 (PTSK…TQRP). Ser103, Ser133, Ser137, Ser166, Ser190, and Ser224 each carry phosphoserine. Residues 145–233 (LQGAQRRVLR…SEPGKLHRVG (89 aa)) enclose the ASD1 domain. The segment at 181–200 (TAHVRSASSSQELGEEEPAR) is disordered. 2 disordered regions span residues 270–303 (SSTE…GPCK) and 349–375 (QTKP…PEDD). Residue Thr383 is modified to Phosphothreonine. Ser385 bears the Phosphoserine mark. Disordered stretches follow at residues 420–503 (LHET…LTWG) and 566–620 (EMGE…STQA). 3 stretches are compositionally biased toward polar residues: residues 444-468 (RPTS…TDPS), 489-503 (SETP…LTWG), and 586-620 (QDLQ…STQA). Positions 517 to 796 (EALVQELARL…QLDTIWSDLS (280 aa)) constitute an ASD2 domain.

This sequence belongs to the shroom family. Interacts with F-actin.

It localises to the cytoplasm. Its subcellular location is the cytoskeleton. Functionally, may be involved in the assembly of microtubule arrays during cell elongation. The polypeptide is Protein Shroom1 (Shroom1) (Mus musculus (Mouse)).